Consider the following 453-residue polypeptide: Exopolyphosphatase PRUNE1 (453 aa).

N-acetylmethionine is present on M1. Residues D28, D30, D106, and D179 each contribute to the Mn(2+) site. The short motif at 106 to 108 is the DHH motif element; it reads DHH. The segment at 393–420 is essential for homodimerization; it reads SLISGLSQDEEDPPLPPTPMNSLVDECP. The tract at residues 395 to 421 is disordered; the sequence is ISGLSQDEEDPPLPPTPMNSLVDECPL. Phosphoserine is present on S399. At T410 the chain carries Phosphothreonine. S414 is modified (phosphoserine).

The protein belongs to the PPase class C family. Prune subfamily. In terms of assembly, homooligomer. Able to homodimerize via its C-terminal domain. Interacts with NME1. Interacts with GSK3; at focal adhesion complexes where paxillin and vinculin are colocalized. Interacts with alpha and beta tubulin. Mn(2+) is required as a cofactor. As to expression, ubiquitously expressed. Seems to be overexpressed in aggressive sarcoma subtypes, such as leiomyosarcomas and malignant fibrous histiocytomas (MFH) as well as in the less malignant liposarcomas.

Its subcellular location is the cytoplasm. The protein localises to the nucleus. The protein resides in the cell junction. It is found in the focal adhesion. The enzyme catalyses diphosphate + H2O = 2 phosphate + H(+). Activated by magnesium ions and inhibited by manganese ions. Inhibited by dipyridamole, moderately sensitive to IBMX and inhibited by vinpocetine. Functionally, phosphodiesterase (PDE) that has higher activity toward cAMP than cGMP, as substrate. Plays a role in cell proliferation, migration and differentiation, and acts as a negative regulator of NME1. Plays a role in the regulation of neurogenesis. Involved in the regulation of microtubule polymerization. This is Exopolyphosphatase PRUNE1 from Homo sapiens (Human).